A 251-amino-acid chain; its full sequence is MKIGKVERYIHEKLEKKRLHFVLIDPDDTSPEVAGKLARVCEELEIDAIMVGGSTGAEGETLDEVVKAIKENYSLPVILFPGSHGGISKYADAIFFMSLLNSRNPFFITGAQALGAFRVKKYNLEPIPMAYIIVEPGETAGWVGDAKPIPRHKPKIAAAYALAGQYLGMRLVYLEAGSGAPQPVPETMVATVKKAIDVPLIVGGGIRSGEQVRKLVKAGADIIVTGTAIESAGSIEEARKKLEDLRRGVSI.

Positions 25 and 54 each coordinate Mg(2+). Sn-glycerol 1-phosphate is bound by residues 173-179 (YLEAGSG), 204-205 (GG), and 226-227 (GT).

The protein belongs to the GGGP/HepGP synthase family. Group II subfamily. It depends on Mg(2+) as a cofactor.

It is found in the cytoplasm. It carries out the reaction sn-glycerol 1-phosphate + (2E,6E,10E)-geranylgeranyl diphosphate = sn-3-O-(geranylgeranyl)glycerol 1-phosphate + diphosphate. Its pathway is membrane lipid metabolism; glycerophospholipid metabolism. Functionally, prenyltransferase that catalyzes the transfer of the geranylgeranyl moiety of geranylgeranyl diphosphate (GGPP) to the C3 hydroxyl of sn-glycerol-1-phosphate (G1P). This reaction is the first ether-bond-formation step in the biosynthesis of archaeal membrane lipids. This Pyrococcus furiosus (strain ATCC 43587 / DSM 3638 / JCM 8422 / Vc1) protein is Geranylgeranylglyceryl phosphate synthase.